A 223-amino-acid chain; its full sequence is ATP phosphoribosyltransferase (223 aa).

It belongs to the ATP phosphoribosyltransferase family. Short subfamily. In terms of assembly, heteromultimer composed of HisG and HisZ subunits.

The protein localises to the cytoplasm. It catalyses the reaction 1-(5-phospho-beta-D-ribosyl)-ATP + diphosphate = 5-phospho-alpha-D-ribose 1-diphosphate + ATP. It participates in amino-acid biosynthesis; L-histidine biosynthesis; L-histidine from 5-phospho-alpha-D-ribose 1-diphosphate: step 1/9. Its function is as follows. Catalyzes the condensation of ATP and 5-phosphoribose 1-diphosphate to form N'-(5'-phosphoribosyl)-ATP (PR-ATP). Has a crucial role in the pathway because the rate of histidine biosynthesis seems to be controlled primarily by regulation of HisG enzymatic activity. The polypeptide is ATP phosphoribosyltransferase (Novosphingobium aromaticivorans (strain ATCC 700278 / DSM 12444 / CCUG 56034 / CIP 105152 / NBRC 16084 / F199)).